The chain runs to 226 residues: EEF1A lysine methyltransferase 3 (226 aa).

S-adenosyl-L-methionine contacts are provided by residues W57, 83–85, D104, W133, and A150; that span reads GAG.

This sequence belongs to the methyltransferase superfamily. METTL21 family. In terms of assembly, interacts with members of the heat shock protein 70 and 90 families and of the TCP-1 chaperonin family, as well as with HSPD1, STIP1 and tubulin; at least some of these proteins may be methylation substrates.

The protein localises to the cytoplasm. It is found in the cytoskeleton. It localises to the microtubule organizing center. Its subcellular location is the centrosome. The catalysed reaction is L-lysyl-[protein] + 3 S-adenosyl-L-methionine = N(6),N(6),N(6)-trimethyl-L-lysyl-[protein] + 3 S-adenosyl-L-homocysteine + 3 H(+). The enzyme catalyses L-lysyl-[protein] + S-adenosyl-L-methionine = N(6)-methyl-L-lysyl-[protein] + S-adenosyl-L-homocysteine + H(+). It carries out the reaction N(6)-methyl-L-lysyl-[protein] + S-adenosyl-L-methionine = N(6),N(6)-dimethyl-L-lysyl-[protein] + S-adenosyl-L-homocysteine + H(+). It catalyses the reaction N(6),N(6)-dimethyl-L-lysyl-[protein] + S-adenosyl-L-methionine = N(6),N(6),N(6)-trimethyl-L-lysyl-[protein] + S-adenosyl-L-homocysteine + H(+). In terms of biological role, protein-lysine methyltransferase that selectively mono-, di- and trimethylates 'Lys-165' of the translation elongation factors EEF1A1 and EEF1A2 in an aminoacyl-tRNA and GTP-dependent manner. EEF1A1 methylation by EEF1AKMT3 is dynamic as well as inducible by stress conditions, such as ER-stress, and plays a regulatory role on mRNA translation. The chain is EEF1A lysine methyltransferase 3 from Bos taurus (Bovine).